The following is a 228-amino-acid chain: Cytidylate kinase (228 aa).

11–19 (GPAGTGKSS) lines the ATP pocket.

This sequence belongs to the cytidylate kinase family. Type 1 subfamily.

The protein localises to the cytoplasm. The enzyme catalyses CMP + ATP = CDP + ADP. The catalysed reaction is dCMP + ATP = dCDP + ADP. This Mycolicibacterium paratuberculosis (strain ATCC BAA-968 / K-10) (Mycobacterium paratuberculosis) protein is Cytidylate kinase.